The following is a 398-amino-acid chain: AT-rich interactive domain-containing protein 6 (398 aa).

Residues 25–87 are disordered; sequence EPLEPENDHN…PKTEGENAKK (63 aa). The ARID domain maps to 106 to 197; that stretch reads PVEQVAFLRE…ALLEYEKCLR (92 aa). The segment at 213–236 is disordered; it reads SSVEKEPSSHQGSGSGRARRDSAA. Residues 305-398 form the sHSP domain; sequence VGPVADWVKI…RLFIRVPFEQ (94 aa).

The protein belongs to the small heat shock protein (HSP20) family.

It is found in the nucleus. In Arabidopsis thaliana (Mouse-ear cress), this protein is AT-rich interactive domain-containing protein 6 (ARID6).